Here is a 739-residue protein sequence, read N- to C-terminus: MAVKVDKDPVPTSFEKWGKPGHFDRTLARGPKTTTWIWNLHADAHDFDSQTSDLEDISRKIFSAHFGHLAVVFVWLSGMYFHGAKFSNYEAWLNNPTVIKPSAQVVWPVVGQGILNGDVGGGFSGIQITSGLFYLWRAAGFTNSYQLYVTAIGGLVMAALMVFAGWFHYHKAAPKLEWFQNAEAMMNHHLSVLLGCGSLGWTGHLIHVSLPVNKLLDSGVAAKDIPLPHEFFDASVMAELYPSFAQGLKPFFTLDWAAYSDFLTFKGGLNPTTGSLWLSDVAHHHLAIAVLFIIAGHMYRTGFGIGHSMKEILEAHKGPFTGEGHKGLYEILTTSWHAQLAVNLALLGSLTIVIAHHMYSMPPYPYMATDYGTQLSLFTHHTWIGGFLIVGAGAHGAIFMVRDYDPAKNVNNLLDRVIRHRDAIISHLNWVCIFLGFHSFGLYIHNDTMRALGRPQDMFSDSAIQLQPIFAQWIQNIHTLAPGGTAPNAIASASQVFGGDVVAIGNKVALMPITLGTADFMVHHIHAFTIHVTVLILLKGLLYSRSSRLVPDKGQLGFRFPCDGPGRGGTCQVSGWDHVFLGLFWMYNSLSIVIFHFSWKMQSDVWGTILPDGSVSHVTGGNFATSAITINGWLRDFLWAQSSQVINSYGSALSAYGIMFLAGHFVFAFSLMFLFSGRGYWQELIESIVWAHNKLKLAPAIQPRALSIVQGRAVGVAHYLLGGIVTTWAFFLARSLSIG.

8 helical membrane passes run 61-84 (IFSA…FHGA), 147-170 (LYVT…FHYH), 186-210 (MNHH…HVSL), 281-299 (VAHH…GHMY), 336-359 (WHAQ…HHMY), 375-401 (LSLF…IFMV), 423-445 (AIIS…LYIH), and 520-538 (FMVH…LILL). [4Fe-4S] cluster-binding residues include C562 and C571. The next 2 membrane-spanning stretches (helical) occupy residues 578-599 (HVFL…HFSW) and 653-675 (LSAY…MFLF). Residue H664 participates in chlorophyll a' binding. M672 and Y680 together coordinate chlorophyll a. W681 contacts phylloquinone. The helical transmembrane segment at 713 to 733 (AVGVAHYLLGGIVTTWAFFLA) threads the bilayer.

It belongs to the PsaA/PsaB family. The PsaA/B heterodimer binds the P700 chlorophyll special pair and subsequent electron acceptors. PSI consists of a core antenna complex that captures photons, and an electron transfer chain that converts photonic excitation into a charge separation. The cyanobacterial PSI reaction center is composed of one copy each of PsaA,B,C,D,E,F,I,J,K,L,M and X, and forms trimeric complexes. PSI electron transfer chain: 5 chlorophyll a, 1 chlorophyll a', 2 phylloquinones and 3 4Fe-4S clusters. PSI core antenna: 90 chlorophyll a, 22 carotenoids, 3 phospholipids and 1 galactolipid. P700 is a chlorophyll a/chlorophyll a' dimer, A0 is one or more chlorophyll a, A1 is one or both phylloquinones and FX is a shared 4Fe-4S iron-sulfur center. is required as a cofactor.

Its subcellular location is the cellular thylakoid membrane. It carries out the reaction reduced [plastocyanin] + hnu + oxidized [2Fe-2S]-[ferredoxin] = oxidized [plastocyanin] + reduced [2Fe-2S]-[ferredoxin]. In terms of biological role, psaA and PsaB bind P700, the primary electron donor of photosystem I (PSI), as well as the electron acceptors A0, A1 and FX. PSI is a plastocyanin/cytochrome c6-ferredoxin oxidoreductase, converting photonic excitation into a charge separation, which transfers an electron from the donor P700 chlorophyll pair to the spectroscopically characterized acceptors A0, A1, FX, FA and FB in turn. Oxidized P700 is reduced on the lumenal side of the thylakoid membrane by plastocyanin or cytochrome c6. This is Photosystem I P700 chlorophyll a apoprotein A1 from Picosynechococcus sp. (strain ATCC 27264 / PCC 7002 / PR-6) (Agmenellum quadruplicatum).